The following is a 251-amino-acid chain: Flap endonuclease Xni (251 aa).

The tract at residues 51-72 is disordered; sequence EDDRSDSWRHQSLPDYKAGRSP. Position 104 (aspartate 104) interacts with Mg(2+). Residues 160-249 form the 5'-3' exonuclease domain; it reads VLPHQLPDYW…LSGNLQQLRL (90 aa). The K(+) site is built by leucine 171, alanine 172, proline 180, valine 182, and isoleucine 185. The segment at 184-189 is interaction with DNA; sequence GIGAKT.

The protein belongs to the Xni family. Mg(2+) is required as a cofactor. The cofactor is K(+).

Has flap endonuclease activity. During DNA replication, flap endonucleases cleave the 5'-overhanging flap structure that is generated by displacement synthesis when DNA polymerase encounters the 5'-end of a downstream Okazaki fragment. In Yersinia enterocolitica serotype O:8 / biotype 1B (strain NCTC 13174 / 8081), this protein is Flap endonuclease Xni.